The primary structure comprises 196 residues: MLTIGVLGLQGAVREHIRSIEACGAAGKVIKWPEELKEIDGLILPGGESTTMRRLIDTYQFMKPLQEFAASGKPVFGTCAGLIILAKNIAGTNDAHLGVLDVTVERNSFGRQVDSFEADLTVKGLEGPFTGVFIRAPHILEAGADVEVLSEHNGRIVAAKQGNLLGCSFHPELTDDHRMTKLFVEMVEKHKREAVV.

Position 47-49 (47-49) interacts with L-glutamine; sequence GES. The active-site Nucleophile is the Cys-79. L-glutamine is bound by residues Arg-106 and 134–135; that span reads IR. Active-site charge relay system residues include His-170 and Glu-172.

It belongs to the glutaminase PdxT/SNO family. As to quaternary structure, in the presence of PdxS, forms a dodecamer of heterodimers. Only shows activity in the heterodimer.

The enzyme catalyses aldehydo-D-ribose 5-phosphate + D-glyceraldehyde 3-phosphate + L-glutamine = pyridoxal 5'-phosphate + L-glutamate + phosphate + 3 H2O + H(+). It carries out the reaction L-glutamine + H2O = L-glutamate + NH4(+). The protein operates within cofactor biosynthesis; pyridoxal 5'-phosphate biosynthesis. Catalyzes the hydrolysis of glutamine to glutamate and ammonia as part of the biosynthesis of pyridoxal 5'-phosphate. The resulting ammonia molecule is channeled to the active site of PdxS. The polypeptide is Pyridoxal 5'-phosphate synthase subunit PdxT (Bacillus licheniformis (strain ATCC 14580 / DSM 13 / JCM 2505 / CCUG 7422 / NBRC 12200 / NCIMB 9375 / NCTC 10341 / NRRL NRS-1264 / Gibson 46)).